We begin with the raw amino-acid sequence, 435 residues long: Serine--tRNA ligase (435 aa).

An L-serine-binding site is contributed by 237-239 (TAE). An ATP-binding site is contributed by 268–270 (RSE). Glutamate 291 lines the L-serine pocket. 355 to 358 (EISS) serves as a coordination point for ATP. Serine 390 contributes to the L-serine binding site.

Belongs to the class-II aminoacyl-tRNA synthetase family. Type-1 seryl-tRNA synthetase subfamily. In terms of assembly, homodimer. The tRNA molecule binds across the dimer.

Its subcellular location is the cytoplasm. It carries out the reaction tRNA(Ser) + L-serine + ATP = L-seryl-tRNA(Ser) + AMP + diphosphate + H(+). The enzyme catalyses tRNA(Sec) + L-serine + ATP = L-seryl-tRNA(Sec) + AMP + diphosphate + H(+). The protein operates within aminoacyl-tRNA biosynthesis; selenocysteinyl-tRNA(Sec) biosynthesis; L-seryl-tRNA(Sec) from L-serine and tRNA(Sec): step 1/1. Catalyzes the attachment of serine to tRNA(Ser). Is also able to aminoacylate tRNA(Sec) with serine, to form the misacylated tRNA L-seryl-tRNA(Sec), which will be further converted into selenocysteinyl-tRNA(Sec). In Lactobacillus delbrueckii subsp. bulgaricus (strain ATCC BAA-365 / Lb-18), this protein is Serine--tRNA ligase.